We begin with the raw amino-acid sequence, 710 residues long: MRYIVSPQLVLQVGKGQEVERALYLTPYDYIDEKSPIYYFLRSHLNIQQPEIVKRHILLTLRMTQLKGYLGNLLDIKDDIIIYSHKNNLEYSYVDNTIFNPFVYTQKKTLLKNDSFLYNVYSGACDFLVIWVARACDTSIPEFGSYEDVDNNIIKFETMLMEVFPQLDLDITVESKFNNIFRTNLKLTGLKKIIQRVQDLDINYKSLLSRYDEHFINMTGNHFILNDEQLNLSIWDLDGTLALSSDGDTVMINNVKLFTDLVSDIDTQMERIKGDITYKVHLATPINSRIKLDIETSFIFIETATNNILLSSDKKISIILAKNHISIKVKNHIPNIEKYFTFLVIAINAMFNSVQKSADFTKVETVYWSRICQNTKNKNRKPIIINYLDPGMKKISNNFYRSDEKEVFINDNGIMFTCMDPLGKYNKVGFLNIFHDMRKYCIPCCFLHDQSHRSTFSSCVHQIDVEKKIVSPYILNFGKVVTESKMSFLPIIFDAFLNDGMTANMEQDNKRLKETSGYHIVRCCAGDDIVRLRTTSDIIQFVNEDKNILIVNDMVYFPMNASDIGKKIHILIQEIVHEVMIVKKKESSDKIDFFPPNYKLLKDLFPKQTIQTPIQSDAGMVLTTDGFYIDGKLFNEDLSSKYVTFTKNVIASDAVAKYFSPLFKYVISEAKDRFIKTWMINIMIHMNVDPNNIIPTLEKYYPNSGRAQIN.

Belongs to the poxviridae VETF large subunit family. In terms of assembly, heterodimer of a 70 kDa and a 82 kDa subunit. Part of the early transcription complex composed of ETF, RAP94/OPG109, and the DNA-directed RNA polymerase.

The protein resides in the virion. Acts with RNA polymerase to initiate transcription from early gene promoters. Is recruited by the RPO-associated protein of 94 kDa RAP94/OPG109 to form the early transcription complex, which also contains the core RNA polymerase. ETF heterodimer binds to early gene promoters. The polypeptide is Early transcription factor 82 kDa subunit (OPG133) (Homo sapiens (Human)).